The sequence spans 72 residues: DNA-directed RNA polymerase subunit omega (72 aa).

Belongs to the RNA polymerase subunit omega family. As to quaternary structure, the RNAP catalytic core consists of 2 alpha, 1 beta, 1 beta' and 1 omega subunit. When a sigma factor is associated with the core the holoenzyme is formed, which can initiate transcription.

The catalysed reaction is RNA(n) + a ribonucleoside 5'-triphosphate = RNA(n+1) + diphosphate. Functionally, promotes RNA polymerase assembly. Latches the N- and C-terminal regions of the beta' subunit thereby facilitating its interaction with the beta and alpha subunits. The chain is DNA-directed RNA polymerase subunit omega from Francisella tularensis subsp. tularensis (strain FSC 198).